Reading from the N-terminus, the 133-residue chain is Ribosome-binding factor A (133 aa).

It belongs to the RbfA family. Monomer. Binds 30S ribosomal subunits, but not 50S ribosomal subunits or 70S ribosomes.

It localises to the cytoplasm. Its function is as follows. One of several proteins that assist in the late maturation steps of the functional core of the 30S ribosomal subunit. Associates with free 30S ribosomal subunits (but not with 30S subunits that are part of 70S ribosomes or polysomes). Required for efficient processing of 16S rRNA. May interact with the 5'-terminal helix region of 16S rRNA. The chain is Ribosome-binding factor A from Shigella boydii serotype 18 (strain CDC 3083-94 / BS512).